The primary structure comprises 202 residues: Glycerol-3-phosphate acyltransferase (202 aa).

Transmembrane regions (helical) follow at residues 2 to 22 (MIVV…GYVI), 54 to 74 (FIVT…PIWF), 85 to 105 (FFTH…YPIY), 120 to 140 (VVLG…FGVL), 141 to 161 (YIFK…VIGS), and 162 to 182 (LIIQ…ILIV).

The protein belongs to the PlsY family. In terms of assembly, probably interacts with PlsX.

It is found in the cell membrane. It catalyses the reaction an acyl phosphate + sn-glycerol 3-phosphate = a 1-acyl-sn-glycero-3-phosphate + phosphate. It functions in the pathway lipid metabolism; phospholipid metabolism. Functionally, catalyzes the transfer of an acyl group from acyl-phosphate (acyl-PO(4)) to glycerol-3-phosphate (G3P) to form lysophosphatidic acid (LPA). This enzyme utilizes acyl-phosphate as fatty acyl donor, but not acyl-CoA or acyl-ACP. This is Glycerol-3-phosphate acyltransferase from Staphylococcus haemolyticus (strain JCSC1435).